A 372-amino-acid chain; its full sequence is Queuine tRNA-ribosyltransferase (372 aa).

Asp92 acts as the Proton acceptor in catalysis. Substrate-binding positions include 92–96 (DSGGY), Asp146, Gln188, and Gly215. The interval 246-252 (GIGSLKE) is RNA binding. The Nucleophile role is filled by Asp265. Residues 270 to 274 (TRLGR) are RNA binding; important for wobble base 34 recognition. Positions 303, 305, 308, and 334 each coordinate Zn(2+).

It belongs to the queuine tRNA-ribosyltransferase family. Homodimer. Within each dimer, one monomer is responsible for RNA recognition and catalysis, while the other monomer binds to the replacement base PreQ1. Requires Zn(2+) as cofactor.

It carries out the reaction 7-aminomethyl-7-carbaguanine + guanosine(34) in tRNA = 7-aminomethyl-7-carbaguanosine(34) in tRNA + guanine. Its pathway is tRNA modification; tRNA-queuosine biosynthesis. Its function is as follows. Catalyzes the base-exchange of a guanine (G) residue with the queuine precursor 7-aminomethyl-7-deazaguanine (PreQ1) at position 34 (anticodon wobble position) in tRNAs with GU(N) anticodons (tRNA-Asp, -Asn, -His and -Tyr). Catalysis occurs through a double-displacement mechanism. The nucleophile active site attacks the C1' of nucleotide 34 to detach the guanine base from the RNA, forming a covalent enzyme-RNA intermediate. The proton acceptor active site deprotonates the incoming PreQ1, allowing a nucleophilic attack on the C1' of the ribose to form the product. After dissociation, two additional enzymatic reactions on the tRNA convert PreQ1 to queuine (Q), resulting in the hypermodified nucleoside queuosine (7-(((4,5-cis-dihydroxy-2-cyclopenten-1-yl)amino)methyl)-7-deazaguanosine). This is Queuine tRNA-ribosyltransferase from Prochlorococcus marinus (strain AS9601).